A 355-amino-acid chain; its full sequence is Ribosomal RNA small subunit methyltransferase H (355 aa).

S-adenosyl-L-methionine-binding positions include 47–49, D65, F92, D113, and Q120; that span reads GGY. A disordered region spans residues 332–355; that stretch reads LLPLATLPETSHPKSASHSKSRRR. Residues 346–355 show a composition bias toward basic residues; the sequence is SASHSKSRRR.

It belongs to the methyltransferase superfamily. RsmH family.

The protein localises to the cytoplasm. The enzyme catalyses cytidine(1402) in 16S rRNA + S-adenosyl-L-methionine = N(4)-methylcytidine(1402) in 16S rRNA + S-adenosyl-L-homocysteine + H(+). In terms of biological role, specifically methylates the N4 position of cytidine in position 1402 (C1402) of 16S rRNA. The chain is Ribosomal RNA small subunit methyltransferase H from Beijerinckia indica subsp. indica (strain ATCC 9039 / DSM 1715 / NCIMB 8712).